Reading from the N-terminus, the 412-residue chain is Multifunctional CCA protein (412 aa).

ATP contacts are provided by Gly-8 and Arg-11. CTP contacts are provided by Gly-8 and Arg-11. Mg(2+) contacts are provided by Glu-21 and Asp-23. Arg-91, Arg-137, and Arg-140 together coordinate ATP. The CTP site is built by Arg-91, Arg-137, and Arg-140. In terms of domain architecture, HD spans 228 to 329 (CGIHTLMSLQ…WRLLQRLDVL (102 aa)).

The protein belongs to the tRNA nucleotidyltransferase/poly(A) polymerase family. Bacterial CCA-adding enzyme type 1 subfamily. In terms of assembly, monomer. Can also form homodimers and oligomers. It depends on Mg(2+) as a cofactor. The cofactor is Ni(2+).

It catalyses the reaction a tRNA precursor + 2 CTP + ATP = a tRNA with a 3' CCA end + 3 diphosphate. The enzyme catalyses a tRNA with a 3' CCA end + 2 CTP + ATP = a tRNA with a 3' CCACCA end + 3 diphosphate. In terms of biological role, catalyzes the addition and repair of the essential 3'-terminal CCA sequence in tRNAs without using a nucleic acid template. Adds these three nucleotides in the order of C, C, and A to the tRNA nucleotide-73, using CTP and ATP as substrates and producing inorganic pyrophosphate. tRNA 3'-terminal CCA addition is required both for tRNA processing and repair. Also involved in tRNA surveillance by mediating tandem CCA addition to generate a CCACCA at the 3' terminus of unstable tRNAs. While stable tRNAs receive only 3'-terminal CCA, unstable tRNAs are marked with CCACCA and rapidly degraded. This Acinetobacter baumannii (strain ATCC 17978 / DSM 105126 / CIP 53.77 / LMG 1025 / NCDC KC755 / 5377) protein is Multifunctional CCA protein.